A 29-amino-acid chain; its full sequence is Galanin (29 aa).

Ala29 carries the post-translational modification Alanine amide.

The protein belongs to the galanin family.

Its subcellular location is the secreted. In terms of biological role, contracts smooth muscle of the gastrointestinal and genitourinary tract, regulates growth hormone release, modulates insulin release, and may be involved in the control of adrenal secretion. The sequence is that of Galanin (gal) from Amia calva (Bowfin).